We begin with the raw amino-acid sequence, 94 residues long: PqqA binding protein (94 aa).

This sequence belongs to the PqqD family. Monomer. Interacts with PqqE.

The protein operates within cofactor biosynthesis; pyrroloquinoline quinone biosynthesis. Its function is as follows. Functions as a PqqA binding protein and presents PqqA to PqqE, in the pyrroloquinoline quinone (PQQ) biosynthetic pathway. The sequence is that of PqqA binding protein from Acinetobacter baumannii (strain AB307-0294).